The following is a 491-amino-acid chain: Dipeptide and tripeptide permease B (491 aa).

The Cytoplasmic segment spans residues 1–26 (MNNTAPGLLHQPKPFFMIFFVELWER). A helical membrane pass occupies residues 27-47 (FGYYGVQGILAVFFVKQLGFS). Topologically, residues 48 to 51 (QEQA) are periplasmic. Residues 52-72 (FITFGAFAALVYGLISIGGYV) form a helical membrane-spanning segment. Topologically, residues 73 to 81 (GDHLLGTKR) are cytoplasmic. Residues 82–102 (TMVLGAIVLALGYFMTGMSLL) form a helical membrane-spanning segment. The Periplasmic segment spans residues 103-105 (KPE). Residues 106–126 (MIFIALGTIAVGNGLFKANPA) form a helical membrane-spanning segment. The Cytoplasmic segment spans residues 127–145 (SLLSKCYPPKDPRLDGAFT). Residues 146 to 166 (LFYMSINIGSLLSLSLAPIIA) form a helical membrane-spanning segment. The Periplasmic segment spans residues 167–171 (ERFGY). The chain crosses the membrane as a helical span at residues 172–192 (AVTYNLCGLGLIIALLVYFAC). Over 193-210 (RGMVRSIGSAPDHQPLNY) the chain is Cytoplasmic. A helical transmembrane segment spans residues 211 to 231 (GKLLLVLAGAVVMIFLCAWLM). H232 is a topological domain (periplasmic). Residues 233 to 253 (NVGVANIVLIAVSAVVLYFFF) traverse the membrane as a helical segment. Residues 254–266 (REAFKQDKTGRNR) lie on the Cytoplasmic side of the membrane. The chain crosses the membrane as a helical span at residues 267–287 (MFVAFILMIEAVLFYILYAQM). The Periplasmic portion of the chain corresponds to 288 to 312 (PTSLNFFAINNVRHELLGFAINPVS). A helical membrane pass occupies residues 313–335 (FQALNPFWVVVASPILASIYTRL). Over 336–349 (GSRGRDMTMPTKFT) the chain is Cytoplasmic. The chain crosses the membrane as a helical span at residues 350–370 (LGMLLCSLGFLTAAAAGMWFA). The Periplasmic segment spans residues 371–378 (DAQGLTSP). A helical transmembrane segment spans residues 379 to 399 (WFVVLVYLFQSLGELMISALG). At 400 to 423 (LAMVAALVPQYLMGFILGMWFLTQ) the chain is on the cytoplasmic side. The chain crosses the membrane as a helical span at residues 424-444 (AAAFLLGGYVATFTAVPAGIH). The Periplasmic segment spans residues 445–454 (DPLQTLPIYT). Residues 455 to 475 (GVFGKIGIATLIVTLVMAAMV) form a helical membrane-spanning segment. Residues 476-491 (PWLNRMMNTPADGQKA) lie on the Cytoplasmic side of the membrane.

It belongs to the major facilitator superfamily. Proton-dependent oligopeptide transporter (POT/PTR) (TC 2.A.17) family. DtpB subfamily.

It localises to the cell inner membrane. Functionally, proton-dependent permease that transports di- and tripeptides. The sequence is that of Dipeptide and tripeptide permease B from Edwardsiella piscicida.